Reading from the N-terminus, the 304-residue chain is Uricase (304 aa).

An N-acetylalanine modification is found at A2. N6-acetyllysine; alternate occurs at positions 10 and 23. 2 positions are modified to N6-succinyllysine; alternate: K10 and K23. Residue K23 is the Charge relay system of the active site. N6-acetyllysine occurs at positions 27 and 36. Residues S39 and S63 each carry the phosphoserine modification. The active-site Charge relay system is T68. T68 and D69 together coordinate urate. 3 positions are modified to N6-acetyllysine: K118, K122, and K164. A urate-binding site is contributed by F170. An N6-acetyllysine mark is found at K175 and K185. R187 provides a ligand contact to urate. K221 and K228 each carry N6-acetyllysine; alternate. Residues K221 and K228 each carry the N6-succinyllysine; alternate modification. A Phosphoserine modification is found at S232. Urate contacts are provided by V235, Q236, and N262. The Charge relay system role is filled by H264. K278 carries the post-translational modification N6-acetyllysine. Phosphotyrosine is present on Y289. A Microbody targeting signal motif is present at residues 302–304; the sequence is SRL.

It belongs to the uricase family. Homotetramer.

It localises to the peroxisome. The enzyme catalyses urate + O2 + H2O = 5-hydroxyisourate + H2O2. The protein operates within purine metabolism; urate degradation; (S)-allantoin from urate: step 1/3. In terms of biological role, catalyzes the oxidation of uric acid to 5-hydroxyisourate, which is further processed to form (S)-allantoin. The polypeptide is Uricase (UOX) (Sus scrofa (Pig)).